A 422-amino-acid polypeptide reads, in one-letter code: Testin (422 aa).

One can recognise a PET domain in the interval 92 to 199 (MILTSPVAAK…GDVKLPKEVE (108 aa)). The disordered stretch occupies residues 135–165 (QPVAGSEGAQYRKKQLAKQLPAHDQDPSKCH). Over residues 155–165 (PAHDQDPSKCH) the composition is skewed to basic and acidic residues. 3 consecutive LIM zinc-binding domains span residues 234 to 299 (YYCF…SEKP), 300 to 359 (RCAG…NHAV), and 360 to 422 (SCQG…KMSS).

Belongs to the prickle / espinas / testin family.

Its subcellular location is the cytoplasm. The protein localises to the cell cortex. The protein resides in the cell junction. It localises to the focal adhesion. Functionally, scaffold protein that may play a role in cell adhesion, cell spreading and in the reorganization of the actin cytoskeleton. May inhibit cell growth. Regulates cranial neural crest migration. Acts together with prickle1 to control axial elongation. The polypeptide is Testin (Xenopus tropicalis (Western clawed frog)).